The following is a 289-amino-acid chain: LysM and putative peptidoglycan-binding domain-containing protein 4 (289 aa).

A disordered region spans residues Met-1–Ser-23. Residues Met-1–Arg-208 are Extracellular-facing. Over residues His-9–Ser-23 the composition is skewed to polar residues. Asn-30 and Asn-59 each carry an N-linked (GlcNAc...) asparagine glycan. The LysM domain occupies Leu-71–Ile-115. Residues Asn-134 and Asn-178 are each glycosylated (N-linked (GlcNAc...) asparagine). Residues Trp-209–Val-229 traverse the membrane as a helical segment. Topologically, residues Tyr-230–Gly-289 are cytoplasmic. The segment at Ser-252 to Gly-272 is disordered.

It is found in the membrane. The polypeptide is LysM and putative peptidoglycan-binding domain-containing protein 4 (lysmd4) (Xenopus laevis (African clawed frog)).